The sequence spans 145 residues: S-adenosylmethionine synthase 2 (145 aa).

Residues 6 to 7 (RK), alanine 23, lysine 27, and lysine 31 contribute to the ATP site. L-methionine is bound at residue lysine 31.

Belongs to the AdoMet synthase family. As to quaternary structure, homotetramer. It depends on Mn(2+) as a cofactor. The cofactor is Mg(2+). Co(2+) is required as a cofactor. Requires K(+) as cofactor. Mainly in floral buds and roots.

It is found in the cytoplasm. It carries out the reaction L-methionine + ATP + H2O = S-adenosyl-L-methionine + phosphate + diphosphate. It functions in the pathway amino-acid biosynthesis; S-adenosyl-L-methionine biosynthesis; S-adenosyl-L-methionine from L-methionine: step 1/1. Catalyzes the formation of S-adenosylmethionine from methionine and ATP. The reaction comprises two steps that are both catalyzed by the same enzyme: formation of S-adenosylmethionine (AdoMet) and triphosphate, and subsequent hydrolysis of the triphosphate. The polypeptide is S-adenosylmethionine synthase 2 (SMS-2) (Petroselinum crispum (Parsley)).